The following is a 293-amino-acid chain: Movement protein BC1 (293 aa).

Residues 207 to 228 form a disordered region; it reads SWASRSTIGPSPSYAGSDQGDA. Over residues 209–222 the composition is skewed to polar residues; that stretch reads ASRSTIGPSPSYAG.

The protein belongs to the begomovirus movement protein BC1 family. Binds to dimeric supercoiled plasmid DNA. Post-translationally, phosphorylated.

The protein localises to the host cell membrane. It is found in the host microsome membrane. The protein resides in the host endoplasmic reticulum membrane. Functionally, movement protein involved in the cell-to-cell and systemic transport of viral genomic DNA. Begomoviruses use 2 proteins to transport their DNA from cell to cell. The nuclear shuttle protein (NSP) shuttles it between nucleus and cytoplasm and the movement protein (MP) probably transports the DNA-NSP complex to the cell periphery and facilitates further movement across the cell wall. The chain is Movement protein BC1 from Tomato golden mosaic virus (strain Yellow vein) (TGMV).